Consider the following 144-residue polypeptide: Large ribosomal subunit protein uL13 (144 aa).

Belongs to the universal ribosomal protein uL13 family. As to quaternary structure, part of the 50S ribosomal subunit.

Functionally, this protein is one of the early assembly proteins of the 50S ribosomal subunit, although it is not seen to bind rRNA by itself. It is important during the early stages of 50S assembly. The chain is Large ribosomal subunit protein uL13 from Nitratidesulfovibrio vulgaris (strain ATCC 29579 / DSM 644 / CCUG 34227 / NCIMB 8303 / VKM B-1760 / Hildenborough) (Desulfovibrio vulgaris).